A 598-amino-acid chain; its full sequence is Vacuolin-A (598 aa).

Residues 482-539 (IKTTEARLKAETDNIALEQRNKAIISESQAKLSSAQREAESLLITAEAQKKASELQGE) are a coiled coil.

The protein belongs to the vacuolin family.

It is found in the endosome membrane. The protein resides in the lysosome. This is Vacuolin-A (vacA) from Dictyostelium discoideum (Social amoeba).